We begin with the raw amino-acid sequence, 447 residues long: tRNA modification GTPase MnmE (447 aa).

3 residues coordinate (6S)-5-formyl-5,6,7,8-tetrahydrofolate: Arg-24, Glu-81, and Lys-120. Residues 216 to 371 form the TrmE-type G domain; it reads GLNVVIAGKP…LRKELSDIAG (156 aa). Asn-226 is a K(+) binding site. GTP is bound by residues 226 to 231, 245 to 251, and 270 to 273; these read NAGKSS, TDIAGTT, and DTAG. Mg(2+) is bound at residue Ser-230. Residues Thr-245, Ile-247, and Thr-250 each coordinate K(+). Thr-251 lines the Mg(2+) pocket. Lys-447 contributes to the (6S)-5-formyl-5,6,7,8-tetrahydrofolate binding site.

It belongs to the TRAFAC class TrmE-Era-EngA-EngB-Septin-like GTPase superfamily. TrmE GTPase family. Homodimer. Heterotetramer of two MnmE and two MnmG subunits. Requires K(+) as cofactor.

The protein localises to the cytoplasm. Its function is as follows. Exhibits a very high intrinsic GTPase hydrolysis rate. Involved in the addition of a carboxymethylaminomethyl (cmnm) group at the wobble position (U34) of certain tRNAs, forming tRNA-cmnm(5)s(2)U34. This chain is tRNA modification GTPase MnmE, found in Ruthia magnifica subsp. Calyptogena magnifica.